The primary structure comprises 149 residues: 3-dehydroquinate dehydratase (149 aa).

Catalysis depends on Y26, which acts as the Proton acceptor. Substrate is bound by residues N77, H83, and D90. The active-site Proton donor is H103. Substrate is bound by residues 104–105 and R114; that span reads LS.

It belongs to the type-II 3-dehydroquinase family. As to quaternary structure, homododecamer.

It carries out the reaction 3-dehydroquinate = 3-dehydroshikimate + H2O. It participates in metabolic intermediate biosynthesis; chorismate biosynthesis; chorismate from D-erythrose 4-phosphate and phosphoenolpyruvate: step 3/7. Its function is as follows. Catalyzes a trans-dehydration via an enolate intermediate. In Aeromonas hydrophila subsp. hydrophila (strain ATCC 7966 / DSM 30187 / BCRC 13018 / CCUG 14551 / JCM 1027 / KCTC 2358 / NCIMB 9240 / NCTC 8049), this protein is 3-dehydroquinate dehydratase.